Consider the following 502-residue polypeptide: Glycerol kinase (502 aa).

Thr-14 contacts ADP. Residues Thr-14, Thr-15, and Ser-16 each contribute to the ATP site. Thr-14 provides a ligand contact to sn-glycerol 3-phosphate. ADP is bound at residue Arg-18. 4 residues coordinate sn-glycerol 3-phosphate: Arg-84, Glu-85, Tyr-136, and Asp-246. Glycerol is bound by residues Arg-84, Glu-85, Tyr-136, Asp-246, and Gln-247. Residues Thr-268 and Gly-311 each contribute to the ADP site. ATP-binding residues include Thr-268, Gly-311, Gln-315, and Gly-412. The ADP site is built by Gly-412 and Asn-416.

Belongs to the FGGY kinase family. In terms of assembly, homotetramer and homodimer (in equilibrium). Heterodimer with EIIA-Glc. Binds 1 zinc ion per glycerol kinase EIIA-Glc dimer. The zinc ion is important for dimerization.

It carries out the reaction glycerol + ATP = sn-glycerol 3-phosphate + ADP + H(+). It functions in the pathway polyol metabolism; glycerol degradation via glycerol kinase pathway; sn-glycerol 3-phosphate from glycerol: step 1/1. With respect to regulation, activity of this regulatory enzyme is affected by several metabolites. Allosterically and non-competitively inhibited by fructose 1,6-bisphosphate (FBP) and unphosphorylated phosphocarrier protein EIIA-Glc (III-Glc), an integral component of the bacterial phosphotransferase (PTS) system. Its function is as follows. Key enzyme in the regulation of glycerol uptake and metabolism. Catalyzes the phosphorylation of glycerol to yield sn-glycerol 3-phosphate. In Salmonella typhimurium (strain LT2 / SGSC1412 / ATCC 700720), this protein is Glycerol kinase.